Here is a 246-residue protein sequence, read N- to C-terminus: DNA repair protein RecO (246 aa).

It belongs to the RecO family.

Functionally, involved in DNA repair and RecF pathway recombination. This chain is DNA repair protein RecO, found in Maridesulfovibrio salexigens (strain ATCC 14822 / DSM 2638 / NCIMB 8403 / VKM B-1763) (Desulfovibrio salexigens).